The primary structure comprises 325 residues: Siroheme decarboxylase NirDL subunit (325 aa).

The protein belongs to the Ahb/Nir family. Forms a complex composed of NirDL, NirG and NirH. All proteins are required for the total conversion of siroheme to didecarboxysiroheme.

It catalyses the reaction siroheme + 2 H(+) = 12,18-didecarboxysiroheme + 2 CO2. It functions in the pathway porphyrin-containing compound metabolism. Involved in heme d1 biosynthesis. Catalyzes the decarboxylation of siroheme into didecarboxysiroheme. In Paracoccus denitrificans (strain Pd 1222), this protein is Siroheme decarboxylase NirDL subunit.